The sequence spans 465 residues: A-type ATP synthase subunit B (465 aa).

Belongs to the ATPase alpha/beta chains family. Has multiple subunits with at least A(3), B(3), C, D, E, F, H, I and proteolipid K(x).

It localises to the cell membrane. In terms of biological role, component of the A-type ATP synthase that produces ATP from ADP in the presence of a proton gradient across the membrane. The B chain is a regulatory subunit. This chain is A-type ATP synthase subunit B, found in Pyrococcus horikoshii (strain ATCC 700860 / DSM 12428 / JCM 9974 / NBRC 100139 / OT-3).